A 394-amino-acid polypeptide reads, in one-letter code: General receptor for phosphoinositides 1-associated scaffold protein (394 aa).

The tract at residues Met-1–Gly-51 is disordered. Pro residues predominate over residues Pro-37–Ala-49. Thr-76 bears the Phosphothreonine mark. Ser-93 bears the Phosphoserine mark. One can recognise a PDZ domain in the interval Val-100–Thr-189. The segment at Val-180–Pro-257 is interaction with PSCD3. Tyr-236 bears the Phosphotyrosine mark. Arg-269 is modified (omega-N-methylarginine). Residues Glu-293–Val-318 are disordered. Residues Ala-296–Ala-306 are compositionally biased toward pro residues. Phosphoserine is present on Ser-386.

In terms of assembly, heteromer. Composed of TAMALIN, CYTH2 and at least one GRM1. Also interacts with CYTH3, GRM2, GRM3 and GRM5. In terms of tissue distribution, expressed in brain.

It localises to the cytoplasm. The protein resides in the perinuclear region. It is found in the cell membrane. The protein localises to the postsynaptic cell membrane. Its function is as follows. Plays a role in intracellular trafficking and contributes to the macromolecular organization of group 1 metabotropic glutamate receptors (mGluRs) at synapses. This chain is General receptor for phosphoinositides 1-associated scaffold protein, found in Rattus norvegicus (Rat).